Reading from the N-terminus, the 972-residue chain is Aminopeptidase N (972 aa).

The Cytoplasmic portion of the chain corresponds to 2–17 (TSQGRTRTLLNLTPIR). Residues 18-39 (LIVALFLVAAAVGLSIGLTYYF) traverse the membrane as a helical; Signal-anchor for type II membrane protein segment. Topologically, residues 40–972 (TRKAFDTSEK…LAAFFKKATL (933 aa)) are extracellular. The span at 47-62 (SEKPGKDDTGGKDKDN) shows a compositional bias: basic and acidic residues. A disordered region spans residues 47 to 66 (SEKPGKDDTGGKDKDNSPSA). A glycan (N-linked (GlcNAc...) asparagine) is linked at N99. E208 serves as a coordination point for substrate. An N-linked (GlcNAc...) asparagine glycan is attached at N227. Position 343–347 (343–347 (GAMEN)) interacts with substrate. Residue H379 coordinates Zn(2+). The Proton acceptor role is filled by E380. Residues H383 and E402 each coordinate Zn(2+). Residue N549 is glycosylated (N-linked (GlcNAc...) asparagine). Intrachain disulfides connect C759/C766 and C804/C840. N858 carries N-linked (GlcNAc...) asparagine glycosylation.

Belongs to the peptidase M1 family. Zn(2+) is required as a cofactor.

Its subcellular location is the membrane. It carries out the reaction Release of an N-terminal amino acid, Xaa-|-Yaa- from a peptide, amide or arylamide. Xaa is preferably Ala, but may be most amino acids including Pro (slow action). When a terminal hydrophobic residue is followed by a prolyl residue, the two may be released as an intact Xaa-Pro dipeptide.. The sequence is that of Aminopeptidase N from Haemonchus contortus (Barber pole worm).